A 130-amino-acid polypeptide reads, in one-letter code: Small ribosomal subunit protein bS6 (130 aa).

Residues 96–130 (VTEASPMAKARDERDSRRSPSDDRIEEESAEENAE) are disordered. The span at 104–118 (KARDERDSRRSPSDD) shows a compositional bias: basic and acidic residues. Over residues 119 to 130 (RIEEESAEENAE) the composition is skewed to acidic residues.

It belongs to the bacterial ribosomal protein bS6 family.

In terms of biological role, binds together with bS18 to 16S ribosomal RNA. The chain is Small ribosomal subunit protein bS6 from Shewanella denitrificans (strain OS217 / ATCC BAA-1090 / DSM 15013).